A 160-amino-acid polypeptide reads, in one-letter code: Phosphopantetheine adenylyltransferase (160 aa).

Residue Ser-10 coordinates substrate. Residues 10-11 and His-18 each bind ATP; that span reads SF. Residues Lys-42, Thr-74, and Arg-88 each contribute to the substrate site. ATP-binding positions include 89–91, Glu-99, and 124–130; these read GLR and YSFVSST.

The protein belongs to the bacterial CoaD family. In terms of assembly, homohexamer. The cofactor is Mg(2+).

It is found in the cytoplasm. It carries out the reaction (R)-4'-phosphopantetheine + ATP + H(+) = 3'-dephospho-CoA + diphosphate. The protein operates within cofactor biosynthesis; coenzyme A biosynthesis; CoA from (R)-pantothenate: step 4/5. In terms of biological role, reversibly transfers an adenylyl group from ATP to 4'-phosphopantetheine, yielding dephospho-CoA (dPCoA) and pyrophosphate. The polypeptide is Phosphopantetheine adenylyltransferase (Leptospira biflexa serovar Patoc (strain Patoc 1 / Ames)).